A 354-amino-acid polypeptide reads, in one-letter code: MVAIAPNPHSGQSVKTIRENLLTPRFYTTDFEQAAKLDLSRQQEQLEAMLAEMRADYNRHHFVRDDSFKGTWDLLDAQTRKAFIDYLERSCVSEFSGFLLFKELSRKLKDRNPLLAEIFHLMARDEARHAGFLNKAMMDFGHAMDLGYLSKTRTYTFFPLPWVLYTVYLSEKIGYWRYIIIYRHLEKHPEHSFYPLFNYFERWCQDENRHGDIFKALIHSQPQLIQGWGAKLWMRFFLLTVFATHTLTVHERAKFYEALGLDATAFDREVIAKTNETAARTFSVVLNVDHPEFYSRLQRCVEISNKLQAIEATHQPKWLKALRKLPHQLAIAGHLLRIYLLPPVNAQQEWGTVH.

The protein belongs to the AcsF family. The cofactor is Fe cation.

The catalysed reaction is Mg-protoporphyrin IX 13-monomethyl ester + 3 NADPH + 3 O2 + 2 H(+) = 3,8-divinyl protochlorophyllide a + 3 NADP(+) + 5 H2O. It functions in the pathway porphyrin-containing compound metabolism; chlorophyll biosynthesis (light-independent). In terms of biological role, catalyzes the formation of the isocyclic ring in chlorophyll biosynthesis. Mediates the cyclase reaction, which results in the formation of divinylprotochlorophyllide (Pchlide) characteristic of all chlorophylls from magnesium-protoporphyrin IX 13-monomethyl ester (MgPMME). The protein is Magnesium-protoporphyrin IX monomethyl ester [oxidative] cyclase 2 of Thermosynechococcus vestitus (strain NIES-2133 / IAM M-273 / BP-1).